Reading from the N-terminus, the 906-residue chain is Eukaryotic translation initiation factor 4 gamma 2 (906 aa).

Met-1 carries the post-translational modification N-acetylmethionine. Residues 1–71 (MESAIAEGGA…SAANNSANEK (71 aa)) form a disordered region. Position 11 is a phosphoserine (Ser-11). An MIF4G domain is found at 78-308 (FRKVRGILNK…QDTVELREHH (231 aa)). Position 89 is a phosphothreonine (Thr-89). Arg-359 carries the omega-N-methylarginine modification. Phosphoserine is present on Ser-394. Lys-430 carries the N6-methyllysine modification. The residue at position 442 (Ser-442) is a Phosphoserine. The segment at 497–540 (PPSAQPPRTQTPPLGQTPQLGLKTNPPLIQEKPAKTSKKPPPSK) is disordered. Residues 502-515 (PPRTQTPPLGQTPQ) show a composition bias toward polar residues. Residue Arg-504 is modified to Omega-N-methylarginine. Thr-507 and Thr-513 each carry phosphothreonine. The region spanning 542 to 665 (ELLKLTEAVV…SISELAQPLE (124 aa)) is the MI domain. Lys-574 is covalently cross-linked (Glycyl lysine isopeptide (Lys-Gly) (interchain with G-Cter in SUMO2)). The region spanning 719 to 903 (EGKGLSFLFP…ETAEEEESEE (185 aa)) is the W2 domain. Phosphoserine is present on Ser-901.

Belongs to the eukaryotic initiation factor 4G family. As to quaternary structure, interacts with the serine/threonine protein kinases MKNK1 and MKNK2. Binds EIF4A and EIF3. Interacts with MIF4GD. Interacts with DAZAP2. Phosphorylation; hyperphosphorylated during mitosis. In terms of tissue distribution, ubiquitously expressed in all tissues examined.

Appears to play a role in the switch from cap-dependent to IRES-mediated translation during mitosis, apoptosis and viral infection. Cleaved by some caspases and viral proteases. The sequence is that of Eukaryotic translation initiation factor 4 gamma 2 from Mus musculus (Mouse).